A 173-amino-acid polypeptide reads, in one-letter code: MTYFMFFLGLCFVLGGLAVASNPSPYYGVVGLVLASVAGCGWLLSLGISFVSLVLFMVYLGGMLVVFVYSVSLAADPFPEAWGDWRVIGYGAGFVGVLMVGMVIGGFVECWDFGVVTVDSVGMFSVRLDFGGVAMFYSCGVGMFLVAGWGLLLTLFVVLELVRGLTRGAIRAV.

5 consecutive transmembrane segments (helical) span residues 1–21 (MTYF…AVAS), 27–47 (YGVV…LSLG), 48–68 (ISFV…VVFV), 87–107 (VIGY…IGGF), and 139–159 (CGVG…FVVL).

It belongs to the complex I subunit 6 family.

It is found in the mitochondrion membrane. The enzyme catalyses a ubiquinone + NADH + 5 H(+)(in) = a ubiquinol + NAD(+) + 4 H(+)(out). Functionally, core subunit of the mitochondrial membrane respiratory chain NADH dehydrogenase (Complex I) that is believed to belong to the minimal assembly required for catalysis. Complex I functions in the transfer of electrons from NADH to the respiratory chain. The immediate electron acceptor for the enzyme is believed to be ubiquinone. In Alca torda (Razorbill), this protein is NADH-ubiquinone oxidoreductase chain 6 (MT-ND6).